Reading from the N-terminus, the 764-residue chain is Nucleolar complex-associated protein 2 (764 aa).

Residues 3 to 69 are a coiled coil; the sequence is AKDDKKRVKK…EEELKRLQEK (67 aa). Disordered stretches follow at residues 23-67, 89-113, 627-646, and 651-726; these read ELNN…KRLQ, ATEI…EGDD, AVFG…DRME, and AFNS…EDDA. The span at 30-41 shows a compositional bias: basic and acidic residues; it reads IDAHDIVMEQKS. A compositionally biased stretch (basic residues) spans 42-51; it reads DKKRGKKVKS. A compositionally biased stretch (basic and acidic residues) spans 52–67; sequence KKAEAEEHEEELKRLQ. The segment covering 90–113 has biased composition (acidic residues); that stretch reads TEIEDDADVEPDTDLEDTEKEGDD. Basic and acidic residues predominate over residues 661-672; that stretch reads DSKEKEPEEEKT. Residues 673 to 680 carry the Nuclear localization signal 1 motif; it reads KKKKRKRG. A compositionally biased stretch (basic residues) spans 673–682; it reads KKKKRKRGGK. The segment covering 693-726 has biased composition (acidic residues); that stretch reads GLGEDDVVEDFVLSSDEEEEDLFDIGGDKDEDDA. A Nuclear localization signal 2 motif is present at residues 738–745; it reads SKKTKGTY.

It belongs to the NOC2 family. As to quaternary structure, component of nucleolar complexes. Forms homodimers. Interacts with RBL and NOC3 in both the nucleolus and nucleoplasm. Binds to SWA2.

The protein localises to the nucleus. It is found in the nucleolus. Its subcellular location is the nucleoplasm. In terms of biological role, together with SWA2, probably involved in pre-ribosome export from the nucleus to the cytoplasm. The sequence is that of Nucleolar complex-associated protein 2 from Arabidopsis thaliana (Mouse-ear cress).